A 662-amino-acid polypeptide reads, in one-letter code: Histidine decarboxylase (662 aa).

2 residues coordinate substrate: tyrosine 81 and histidine 194. Position 305 is an N6-(pyridoxal phosphate)lysine (lysine 305).

It belongs to the group II decarboxylase family. As to quaternary structure, homodimer. Pyridoxal 5'-phosphate is required as a cofactor.

The catalysed reaction is L-histidine + H(+) = histamine + CO2. The protein operates within amine and polyamine biosynthesis; histamine biosynthesis; histamine from L-histidine: step 1/1. Catalyzes the biosynthesis of histamine from histidine. This chain is Histidine decarboxylase (HDC), found in Homo sapiens (Human).